The sequence spans 425 residues: Neuromedin-U receptor 1 (425 aa).

The Extracellular segment spans residues 1 to 59 (MTPPCLNCSFFPGQLSPNASTGLLSCNDSEFKEHFDLEDLNLTHEDLRLKYLGPQQVKQ). N-linked (GlcNAc...) asparagine glycosylation is present at asparagine 41. Residues 60 to 80 (FLPICVTYLLIFVVGTLGNGL) form a helical membrane-spanning segment. Topologically, residues 81–96 (TCTVILRQKAMHTPTN) are cytoplasmic. A helical transmembrane segment spans residues 97-117 (FYLFSLAVSDLLVLLVGLPLE). The Extracellular segment spans residues 118-137 (LYEMQHNYPFQLGAGGCYFR). Cysteine 134 and cysteine 219 form a disulfide bridge. A helical transmembrane segment spans residues 138–158 (ILLLETVCLASVLNVTALSVE). The Cytoplasmic portion of the chain corresponds to 159 to 181 (RYVAVVHPLQAKSVMTRTHVRRM). The helical transmembrane segment at 182-202 (LGAIWVFAILFSLPNTSLHGL) threads the bilayer. At 203 to 235 (SPLYVPCRGPVPDSVTCTLVRPQFFYKLVIQTT) the chain is on the extracellular side. A helical membrane pass occupies residues 236 to 256 (ILLFFCLPMVTISVLYLLIGL). Residues 257–294 (RLRRERILLQEEVKGRISAAARQASHRSIQLRDRERRQ) lie on the Cytoplasmic side of the membrane. Residues 295-315 (VTKMLIALVIVFGTCWVPFHA) form a helical membrane-spanning segment. Over 316-331 (DRLMWSMVSHWTDGLR) the chain is Extracellular. Residues 332–352 (LAFQSVHLASGVFLYLGSAAN) traverse the membrane as a helical segment. Residues 353-425 (PVLYNLMSTR…GCEQETDPPE (73 aa)) lie on the Cytoplasmic side of the membrane. Residues 406–425 (DVPLAENRDPGCEQETDPPE) form a disordered region.

The protein belongs to the G-protein coupled receptor 1 family. Highly expressed in the small intestine and lung. Low expression in the central nervous system.

It is found in the cell membrane. Its function is as follows. Receptor for the neuromedin-U and neuromedin-S neuropeptides. The chain is Neuromedin-U receptor 1 (Nmur1) from Rattus norvegicus (Rat).